A 514-amino-acid polypeptide reads, in one-letter code: Cilia- and flagella-associated protein 53 (514 aa).

Coiled coils occupy residues 91–176 (VINT…EKKV) and 205–478 (WEED…AGLA). 2 disordered regions span residues 261 to 296 (QNKA…QDKI) and 495 to 514 (QALS…KPPL).

Belongs to the CFAP53 family. In terms of assembly, microtubule inner protein component of sperm flagellar doublet microtubules. Interacts with PIERCE1 and PIERCE2; the interactions link outer dynein arms docking complex (ODA-DC) to the internal microtubule inner proteins (MIP) in cilium axoneme. Interacts with CCDC38. Interacts with CCDC42 and IFT88. Interacts with centriolar satellite proteins PIBF1/CEP90 and PCM1. Interacts with dyneins DNAIC1, DNAIC2 AND DNAH11 and with ODA-DC component ODAD4/TTC25. In terms of tissue distribution, expressed predominantly in testis (at protein level). In embryos at 8 dpc, specifically expressed in the node, in particular within the pit cells that are located at the center of the node and have rotating monocilia on their apical surface. In the adult, expressed in epithelial cells of the trachea, brain ventricles, oviduct and testis.

The protein localises to the cytoplasm. It is found in the cytoskeleton. Its subcellular location is the cilium axoneme. It localises to the flagellum axoneme. The protein resides in the microtubule organizing center. The protein localises to the centrosome. It is found in the centriolar satellite. Its subcellular location is the spindle pole. Microtubule inner protein (MIP) part of the dynein-decorated doublet microtubules (DMTs) in cilia axoneme, which is required for motile cilia beating. Regulates motility patterns of both 9+0 and 9+2 motile cilia through differential localization and recruitment of axonemal dynein components. Required for centriolar satellite integrity and non-motile cilium assembly. Required for motile cilium formation. Through its role in the beating of primary cilia, involved in the establishment of organ laterality during embryogenesis. Required for sperm flagellum biogenesis and is essential for male fertility. The polypeptide is Cilia- and flagella-associated protein 53 (Mus musculus (Mouse)).